The sequence spans 464 residues: Uronate isomerase (464 aa).

The protein belongs to the metallo-dependent hydrolases superfamily. Uronate isomerase family.

The catalysed reaction is D-glucuronate = D-fructuronate. The enzyme catalyses aldehydo-D-galacturonate = keto-D-tagaturonate. The protein operates within carbohydrate metabolism; pentose and glucuronate interconversion. This is Uronate isomerase from Caldicellulosiruptor saccharolyticus (strain ATCC 43494 / DSM 8903 / Tp8T 6331).